Reading from the N-terminus, the 177-residue chain is Large ribosomal subunit protein uL6 (177 aa).

It belongs to the universal ribosomal protein uL6 family. In terms of assembly, part of the 50S ribosomal subunit.

Its function is as follows. This protein binds to the 23S rRNA, and is important in its secondary structure. It is located near the subunit interface in the base of the L7/L12 stalk, and near the tRNA binding site of the peptidyltransferase center. The sequence is that of Large ribosomal subunit protein uL6 from Erwinia tasmaniensis (strain DSM 17950 / CFBP 7177 / CIP 109463 / NCPPB 4357 / Et1/99).